We begin with the raw amino-acid sequence, 237 residues long: Ribose-5-phosphate isomerase A (237 aa).

Residues Thr-32 to Thr-35, Asp-85 to Asp-88, and Lys-99 to Gly-102 contribute to the substrate site. Glu-108 (proton acceptor) is an active-site residue. Residue Arg-126 participates in substrate binding.

This sequence belongs to the ribose 5-phosphate isomerase family. In terms of assembly, homodimer.

It carries out the reaction aldehydo-D-ribose 5-phosphate = D-ribulose 5-phosphate. The protein operates within carbohydrate degradation; pentose phosphate pathway; D-ribose 5-phosphate from D-ribulose 5-phosphate (non-oxidative stage): step 1/1. Functionally, catalyzes the reversible conversion of ribose-5-phosphate to ribulose 5-phosphate. The polypeptide is Ribose-5-phosphate isomerase A (Aeropyrum pernix (strain ATCC 700893 / DSM 11879 / JCM 9820 / NBRC 100138 / K1)).